A 723-amino-acid polypeptide reads, in one-letter code: Probable C-mannosyltransferase DPY19L4 (723 aa).

The disordered stretch occupies residues 1–33 (MAEEEGPPVELRQRKKPKSSENKESAKEEKISD). Alanine 2 is subject to N-acetylalanine. Basic and acidic residues predominate over residues 18 to 32 (KSSENKESAKEEKIS). The next 12 helical transmembrane spans lie at 52–72 (IFIG…YLSA), 161–178 (VYFY…YVTA), 184–202 (WLMS…WFVI), 222–240 (LPYF…KSNL), 260–280 (MMMW…LFLL), 292–310 (YEVY…LLQF), 316–337 (LVSP…QLNV), 349–370 (VINF…KMFV), 421–441 (LLPF…QVIF), 466–486 (IIYH…IEGL), 489–509 (IWIP…ELWM), and 522–542 (PILL…LSLW).

Belongs to the dpy-19 family. As to expression, widely expressed.

It localises to the membrane. Probable C-mannosyltransferase that mediates C-mannosylation of tryptophan residues on target proteins. The sequence is that of Probable C-mannosyltransferase DPY19L4 (DPY19L4) from Homo sapiens (Human).